We begin with the raw amino-acid sequence, 202 residues long: UPF0301 protein ML0028 (202 aa).

This sequence belongs to the UPF0301 (AlgH) family.

This Mycobacterium leprae (strain TN) protein is UPF0301 protein ML0028.